Consider the following 282-residue polypeptide: HTH-type transcriptional activator RhaR (282 aa).

The HTH araC/xylS-type domain occupies 179 to 277 (DKLITRLAAS…GMTPSQWRHL (99 aa)). 2 DNA-binding regions (H-T-H motif) span residues 196 to 217 (DKFC…RQQT) and 244 to 267 (ISDI…TRET).

In terms of assembly, binds DNA as a dimer.

The protein resides in the cytoplasm. Activates expression of the rhaSR operon in response to L-rhamnose. This Escherichia coli O1:K1 / APEC protein is HTH-type transcriptional activator RhaR.